Here is a 239-residue protein sequence, read N- to C-terminus: Elongation factor Ts (239 aa).

Positions 82–85 are involved in Mg(2+) ion dislocation from EF-Tu; that stretch reads TDFV. The segment at 213–239 is disordered; sequence AAQTKPKAEEKPAAKKATSKKKKGKKK. Basic residues predominate over residues 229–239; it reads ATSKKKKGKKK.

It belongs to the EF-Ts family.

The protein resides in the cytoplasm. Functionally, associates with the EF-Tu.GDP complex and induces the exchange of GDP to GTP. It remains bound to the aminoacyl-tRNA.EF-Tu.GTP complex up to the GTP hydrolysis stage on the ribosome. This Acaryochloris marina (strain MBIC 11017) protein is Elongation factor Ts.